The following is a 1192-amino-acid chain: Integrator complex subunit 2 (1192 aa).

The chain crosses the membrane as a helical span at residues 420 to 436; that stretch reads FVSLSFCMLLAFSTLVS.

It belongs to the Integrator subunit 2 family. In terms of assembly, component of the Integrator complex, composed of core subunits INTS1, INTS2, INTS3, INTS4, INTS5, INTS6, INTS7, INTS8, INTS9/RC74, INTS10, INTS11/CPSF3L, INTS12, INTS13, INTS14 and INTS15. The core complex associates with protein phosphatase 2A subunits PPP2CA and PPP2R1A, to form the Integrator-PP2A (INTAC) complex.

Its subcellular location is the nucleus. The protein resides in the nucleus membrane. It is found in the cytoplasm. Functionally, component of the integrator complex, a multiprotein complex that terminates RNA polymerase II (Pol II) transcription in the promoter-proximal region of genes. The integrator complex provides a quality checkpoint during transcription elongation by driving premature transcription termination of transcripts that are unfavorably configured for transcriptional elongation: the complex terminates transcription by (1) catalyzing dephosphorylation of the C-terminal domain (CTD) of Pol II subunit POLR2A/RPB1 and SUPT5H/SPT5, (2) degrading the exiting nascent RNA transcript via endonuclease activity and (3) promoting the release of Pol II from bound DNA. The integrator complex is also involved in terminating the synthesis of non-coding Pol II transcripts, such as enhancer RNAs (eRNAs), small nuclear RNAs (snRNAs), telomerase RNAs and long non-coding RNAs (lncRNAs). In Gallus gallus (Chicken), this protein is Integrator complex subunit 2 (INTS2).